Reading from the N-terminus, the 166-residue chain is Putative membrane protein 162 (166 aa).

Met1 is a topological domain (intravirion). Residues 2–22 (YYPAVQVLIGIILVDNFNTEF) traverse the membrane as a helical segment. At 23–166 (LSSEKKNCKT…TIMGIARNIL (144 aa)) the chain is on the virion surface side.

Belongs to the asfivirus envelope protein p22 family.

It localises to the virion membrane. Its subcellular location is the host cell membrane. The chain is Putative membrane protein 162 from African swine fever virus (isolate Tick/Malawi/Lil 20-1/1983) (ASFV).